A 222-amino-acid polypeptide reads, in one-letter code: 26S proteasome non-ATPase regulatory subunit 9 (222 aa).

The PDZ domain maps to Gln108 to Arg194. A Phosphoserine modification is found at Ser128.

The protein belongs to the proteasome subunit p27 family. Interacts with PSMC3. Part of a transient complex (modulator) containing PSMD9, PSMC6 and PSMC3 formed during the assembly of the 26S proteasome.

Acts as a chaperone during the assembly of the 26S proteasome, specifically of the base subcomplex of the PA700/19S regulatory complex (RC). During the base subcomplex assembly is part of an intermediate PSMD9:PSMC6:PSMC3 module, also known as modulator trimer complex; PSMD9 is released during the further base assembly process. This Mus musculus (Mouse) protein is 26S proteasome non-ATPase regulatory subunit 9 (Psmd9).